The chain runs to 335 residues: Nucleoid-associated protein YejK (335 aa).

The protein belongs to the YejK family.

The protein localises to the cytoplasm. The protein resides in the nucleoid. The polypeptide is Nucleoid-associated protein YejK (Salmonella schwarzengrund (strain CVM19633)).